Consider the following 354-residue polypeptide: MATVVMEQIGRLFINAQQLRQIPRFLESAFPKLPCTVMVSDVPWVFRESHIITGYRPPDQNWRYYFLTLFQRHNESVNVWTHLLASLIILVKFQELSETVDFLRDPHAQPMFILLLAAFTYLGCSALAHLLSAKSEISHYTFYFLDYVGVAVYQYGSALAHFYYVVEEEWHAQVRTFFLPASAFLAWLSCTGCCYGKYASPKLPKFVHKLFQVVPSGLAYCLDISPVLHRIYRCYSSEHWCADQAVVYHCYQVLFFLISAYFFSYPHPERWFPGRCDFIGQGHQIFHVFLVLCTLVQIEAVRLDYTERRRLYEHLHGDLAHDAVALFIFTACCSALTAFYVRKRVKTYLEEKQE.

Residues Met-1–Ser-76 lie on the Cytoplasmic side of the membrane. Residues Val-77 to Ser-97 form a helical membrane-spanning segment. At Glu-98 to Pro-110 the chain is on the extracellular side. Residues Met-111 to Leu-131 form a helical membrane-spanning segment. The Cytoplasmic segment spans residues Ser-132–Thr-141. Residues Phe-142–Phe-162 form a helical membrane-spanning segment. Residues Tyr-163–Arg-175 are Extracellular-facing. Residues Thr-176 to Gly-196 traverse the membrane as a helical segment. Topologically, residues Lys-197 to Gln-244 are cytoplasmic. The helical transmembrane segment at Ala-245 to Tyr-265 threads the bilayer. Topologically, residues Pro-266–Asp-277 are extracellular. Residues Phe-278–Ile-298 traverse the membrane as a helical segment. Residues Glu-299 to Asp-318 are Cytoplasmic-facing. A helical transmembrane segment spans residues Leu-319–Phe-339. Residues Tyr-340–Glu-354 lie on the Extracellular side of the membrane.

This sequence belongs to the ADIPOR family.

Its subcellular location is the cell membrane. Functionally, steroid membrane receptor. Signals upon progestin binding, resulting in rapid activation of MAPK and down-regulation of adenylyl cyclase activity. Interacts with steroids with varying degrees of affinity, showing specificity for activation by the maturation-inducing steroid (MIS) 4-pregnen-17,20beta-diol-3-one (17,20beta-DHP). Capable of mediating progestin-induced oocyte maturation. The sequence is that of Membrane progestin receptor alpha-B (paqr7b) from Danio rerio (Zebrafish).